Consider the following 4660-residue polypeptide: Low-density lipoprotein receptor-related protein 2 (4660 aa).

The N-terminal stretch at 1–25 is a signal peptide; that stretch reads MERGAAAAAWMLLLAIAACLEPVSS. Topologically, residues 26-4425 are extracellular; it reads QECGSGNFRC…LSRGIPPGTT (4400 aa). LDL-receptor class A domains are found at residues 27-63, 66-104, 107-143, 141-180, 182-218, and 221-257; these read ECGS…IGCP, SCES…QNCA, TCSA…RNCH, NCHY…ANCT, LCSQ…RNCN, and TCGG…DGCE. 18 cysteine pairs are disulfide-bonded: Cys28/Cys40, Cys35/Cys53, Cys47/Cys62, Cys67/Cys80, Cys74/Cys93, Cys87/Cys103, Cys108/Cys120, Cys115/Cys133, Cys127/Cys142, Cys142/Cys157, Cys152/Cys170, Cys164/Cys179, Cys183/Cys195, Cys190/Cys208, Cys202/Cys217, Cys222/Cys234, Cys229/Cys247, and Cys241/Cys256. 2 N-linked (GlcNAc...) asparagine glycosylation sites follow: Asn159 and Asn178. The N-linked (GlcNAc...) asparagine glycan is linked to Asn259. The 44-residue stretch at 264 to 307 folds into the LDL-receptor class A 7 domain; it reads RCYPREWACPGSGRCISIDKVCDGVPDCPEGDDENNVTSGRTCG. Intrachain disulfides connect Cys265-Cys278, Cys272-Cys291, and Cys285-Cys306. N-linked (GlcNAc...) asparagine glycans are attached at residues Asn299 and Asn340. The EGF-like 1; calcium-binding domain occupies 347-382; the sequence is DFDDCQIWGICDQKCENRQGRHQCLCEEGYILERGQ. Intrachain disulfides connect Cys351–Cys361 and Cys357–Cys370. LDL-receptor class B repeat units lie at residues 435 to 477, 478 to 520, 521 to 567, and 568 to 612; these read HRVF…DWIN, NKLY…DPTV, GYLF…DLVS, and KRVY…FEEH. An N-linked (GlcNAc...) asparagine glycan is attached at Asn462. Asn657 is a glycosylation site (N-linked (GlcNAc...) asparagine). LDL-receptor class B repeat units follow at residues 752–794, 795–836, 837–880, and 881–924; these read STVF…DWIS, RNLY…HPTA, GYMF…DWSA, and SRLY…FKDN. Residue Asn865 is glycosylated (N-linked (GlcNAc...) asparagine). The 37-residue stretch at 1024 to 1060 folds into the LDL-receptor class A 8 domain; it reads QCGSLSFPCNNGKCVPSFFRCDGVDDCHDNSDEHQCG. 3 cysteine pairs are disulfide-bonded: Cys1025–Cys1037, Cys1032–Cys1050, and Cys1044–Cys1059. An N-linked (GlcNAc...) asparagine glycan is attached at Asn1063. LDL-receptor class A domains follow at residues 1065–1102, 1109–1145, 1149–1185, 1187–1224, 1230–1268, 1271–1307, and 1312–1350; these read TCSP…QNCP, TCPS…KNCQ, TCQP…AGCV, NCTS…AGCP, MCHP…TGCV, TCSP…KDCP, and HCPS…PLCN. Cystine bridges form between Cys1066–Cys1079, Cys1073–Cys1092, Cys1086–Cys1101, Cys1110–Cys1122, Cys1117–Cys1135, Cys1129–Cys1144, Cys1150–Cys1162, Cys1157–Cys1175, and Cys1169–Cys1184. Ca(2+)-binding residues include Trp1127, Asp1130, Asp1132, Asp1134, Asp1140, and Glu1141. An N-linked (GlcNAc...) asparagine glycan is attached at Asn1187. Disulfide bonds link Cys1188/Cys1201, Cys1195/Cys1214, Cys1208/Cys1223, Cys1231/Cys1244, Cys1238/Cys1257, Cys1251/Cys1267, Cys1272/Cys1284, Cys1279/Cys1297, Cys1291/Cys1306, Cys1313/Cys1326, Cys1320/Cys1339, Cys1333/Cys1349, Cys1354/Cys1365, Cys1361/Cys1374, Cys1376/Cys1389, Cys1395/Cys1405, Cys1401/Cys1414, and Cys1416/Cys1429. 6 residues coordinate Ca(2+): Tyr1206, Asp1209, Val1211, Asp1213, Asp1219, and Glu1220. N-linked (GlcNAc...) asparagine glycans are attached at residues Asn1328 and Asn1341. The 41-residue stretch at 1350–1390 folds into the EGF-like 2 domain; it reads NQDSCSHFNGGCTHQCMQGPFGATCLCPLGYQLANDTKTCE. Asn1384 carries an N-linked (GlcNAc...) asparagine glycan. Residues 1391-1430 form the EGF-like 3; calcium-binding domain; it reads DINECDIPGFCSQHCVNMRGSFRCACDPEYTLESDGRTCK. Asn1451, Asn1497, and Asn1551 each carry an N-linked (GlcNAc...) asparagine glycan. LDL-receptor class B repeat units lie at residues 1479–1521, 1522–1564, 1567–1610, 1611–1655, and 1656–1696; these read GRVF…DWIG, RNLY…DPRM, NVMF…DYPN, RLIY…FEDF, and VYWT…IHPS. Residues Asn1676, Asn1733, and Asn1811 are each glycosylated (N-linked (GlcNAc...) asparagine). LDL-receptor class B repeat units follow at residues 1791 to 1833, 1834 to 1883, 1884 to 1931, 1932 to 1973, 1974 to 2014, 2108 to 2157, 2158 to 2202, 2203 to 2246, and 2247 to 2290; these read QFIY…DWVS, RNIY…DPAR, GKLY…DIQE, QKLY…YGSF, LYYS…YHRR, GFIY…DWAA, GNLY…DPKH, RYLF…DHDT, and GYIY…FGES. N-linked (GlcNAc...) asparagine glycosylation is found at Asn2134, Asn2178, and Asn2225. Asn2396 carries N-linked (GlcNAc...) asparagine glycosylation. 5 LDL-receptor class B repeats span residues 2432-2478, 2479-2519, 2520-2563, 2564-2605, and 2606-2647; these read NRIF…DWIN, RRIY…DPCR, GYMY…DLET, DLLY…YGQY, and IYWT…VVKT. N-linked (GlcNAc...) asparagine glycosylation is found at Asn2488 and Asn2548. LDL-receptor class A domains follow at residues 2700–2738, 2741–2777, 2780–2819, 2822–2861, 2864–2902, 2907–2946, 2949–2991, 2994–3030, 3033–3071, and 3076–3112; these read RCNQ…TVCA, TCRS…AGCL, NCNS…KNCP, TCPP…IYCA, TCRS…DTCG, TCRA…HHCE, NCSS…QNCT, TCSA…RGCS, PCHA…HLCH, and TCPL…KGCG. Disulfide bonds link Cys2701-Cys2713, Cys2708-Cys2726, Cys2720-Cys2737, Cys2742-Cys2754, Cys2749-Cys2767, Cys2761-Cys2776, Cys2781-Cys2794, Cys2789-Cys2807, Cys2801-Cys2818, Cys2823-Cys2836, Cys2830-Cys2849, Cys2843-Cys2860, Cys2865-Cys2878, Cys2872-Cys2891, Cys2885-Cys2901, Cys2908-Cys2920, Cys2915-Cys2933, and Cys2927-Cys2945. An N-linked (GlcNAc...) asparagine glycan is attached at Asn2782. A glycan (N-linked (GlcNAc...) asparagine) is linked at Asn2810. A glycan (N-linked (GlcNAc...) asparagine) is linked at Asn2949. Intrachain disulfides connect Cys2950–Cys2967, Cys2957–Cys2980, Cys2974–Cys2990, Cys2995–Cys3007, Cys3002–Cys3020, Cys3014–Cys3029, Cys3034–Cys3046, Cys3041–Cys3059, Cys3053–Cys3070, Cys3077–Cys3089, Cys3084–Cys3102, Cys3096–Cys3111, Cys3116–Cys3128, Cys3124–Cys3137, Cys3139–Cys3152, Cys3158–Cys3169, Cys3165–Cys3178, and Cys3180–Cys3193. Asn2989 carries N-linked (GlcNAc...) asparagine glycosylation. An EGF-like 4 domain is found at 3112-3153; sequence GINECLDSSISRCDHNCTDTITSFYCSCLPGYKLMSDKRSCV. An N-linked (GlcNAc...) asparagine glycan is attached at Asn3127. Residues 3154 to 3194 enclose the EGF-like 5; calcium-binding domain; the sequence is DIDECKESPQLCSQKCENVVGSYICKCAPGYIREPDGKSCR. Asn3213, Asn3259, Asn3317, and Asn3357 each carry an N-linked (GlcNAc...) asparagine glycan. LDL-receptor class B repeat units follow at residues 3241-3283, 3284-3326, 3335-3378, 3379-3421, and 3422-3462; these read KRLY…DWVS, RKLY…EHPR, GHVY…DYTN, DLLY…FEDT, and VFWT…YHPY. An N-linked (GlcNAc...) asparagine glycan is attached at Asn3448. 8 consecutive LDL-receptor class A domains span residues 3513 to 3551, 3554 to 3592, 3595 to 3633, 3636 to 3674, 3679 to 3717, 3720 to 3757, 3760 to 3796, and 3799 to 3835; these read MCSS…DLCP, FCRL…VLCE, RCES…SHCA, TCRP…DECT, NCDN…QGCE, PCHP…ENCV, ECSE…RDCE, and TCHP…SACP. Intrachain disulfides connect Cys3514–Cys3527, Cys3521–Cys3540, Cys3534–Cys3550, Cys3555–Cys3567, Cys3562–Cys3580, Cys3574–Cys3591, Cys3596–Cys3608, Cys3603–Cys3621, Cys3615–Cys3632, Cys3637–Cys3649, Cys3644–Cys3662, Cys3656–Cys3673, Cys3680–Cys3694, Cys3688–Cys3707, Cys3701–Cys3716, Cys3721–Cys3734, Cys3729–Cys3747, Cys3741–Cys3756, Cys3761–Cys3773, Cys3768–Cys3786, Cys3780–Cys3795, Cys3800–Cys3812, Cys3807–Cys3825, and Cys3819–Cys3834. Asn3566 carries an N-linked (GlcNAc...) asparagine glycan. Asn3682 carries N-linked (GlcNAc...) asparagine glycosylation. An N-linked (GlcNAc...) asparagine glycan is attached at Asn3840. LDL-receptor class A domains lie at 3843–3881, 3884–3923, and 3929–3965; these read YCPA…HLCF, PCES…EHCR, and PCTD…TGCN. 9 disulfides stabilise this stretch: Cys3844/Cys3856, Cys3851/Cys3869, Cys3863/Cys3880, Cys3885/Cys3898, Cys3893/Cys3911, Cys3905/Cys3922, Cys3930/Cys3942, Cys3937/Cys3955, and Cys3949/Cys3964. In terms of domain architecture, EGF-like 6 spans 3968 to 4003; sequence DNRTCAENICEQNCTQLSSGGFICSCRPGFKPSTSD. 2 N-linked (GlcNAc...) asparagine glycosylation sites follow: Asn3969 and Asn3980. Cystine bridges form between Cys3972–Cys3981, Cys3977–Cys3991, Cys4013–Cys4023, Cys4019–Cys4032, and Cys4034–Cys4049. Residues 4009–4050 form the EGF-like 7; calcium-binding domain; that stretch reads DINECEEFGICPQSCRNSKGSYECFCVDGFKSMSTHYGERCA. A glycan (N-linked (GlcNAc...) asparagine) is linked at Asn4070. LDL-receptor class B repeat units follow at residues 4156-4198, 4199-4242, and 4244-4285; these read RHIY…NPKL, GLMF…DYLN, and DRVY…FEDK. A glycan (N-linked (GlcNAc...) asparagine) is linked at Asn4329. In terms of domain architecture, EGF-like 8 spans 4379 to 4413; it reads MPPPCRCMHGGNCYFDENELPKCKCSSGYSGEYCE. 3 disulfides stabilise this stretch: Cys4383-Cys4391, Cys4385-Cys4401, and Cys4403-Cys4412. Residues 4426 to 4446 traverse the membrane as a helical segment; that stretch reads MAVLLTFVIVIIVGALVLVGL. At 4447 to 4660 the chain is on the cytoplasmic side; sequence FHYRKTGSLL…ANLVKEDSDV (214 aa). The SH3-binding motif lies at 4454–4463; it reads SLLPTLPKLP. A PxLPxI/L motif 1; mediates interaction with ANKRA2 motif is present at residues 4457–4462; sequence PTLPKL. The PxLPxI/L motif 2; mediates interaction with ANKRA2 motif lies at 4460–4465; it reads PKLPSL. Ser4464 and Ser4467 each carry phosphoserine. An Endocytosis signal motif is present at residues 4522-4527; that stretch reads FENPMY. The interval 4559-4582 is disordered; sequence NYGRPIDPSEIVPEPKPASPGADE. Ser4577 is subject to Phosphoserine. The segment at 4597–4610 is interaction with DAB2; it reads QTTNFENPIYAEMD. The short motif at 4603–4606 is the NPXY motif element; it reads NPIY. Residues 4606-4609 carry the SH2-binding motif; that stretch reads YAEM. The disordered stretch occupies residues 4617 to 4660; it reads VAVAPPPSPSLPAKASKRNLTPGYTATEDTFKDTANLVKEDSDV. An SH3-binding motif is present at residues 4619–4630; the sequence is VAPPPSPSLPAK. The residue at position 4624 (Ser4624) is a Phosphoserine. The segment covering 4634 to 4644 has biased composition (polar residues); it reads RNLTPGYTATE. Position 4637 is a phosphothreonine (Thr4637). Ser4658 is subject to Phosphoserine.

This sequence belongs to the LDLR family. In terms of assembly, binds plasminogen, extracellular matrix components, plasminogen activator-plasminogen activator inhibitor type I complex, apolipoprotein E-enriched beta-VLDL, lipoprotein lipase, lactoferrin, CLU/clusterin and calcium. Forms a multimeric complex together with LRPAP1. Interacts (via PxLPxI/L motif) with ANKRA2 (via ankyrin repeats). Interacts with LRP2BP. Interacts (via NPXY motif) with DAB2; the interaction is not affected by tyrosine phosphorylation of the NPXY motif. Interacts with MB. Interacts with BMP4. Interacts with the Sonic hedgehog protein N-product which is the active product of SHH. Interacts with CST3 in a calcium-dependent manner. Interacts with the vitamin-D binding protein GC/DBP. Interacts with sex hormone-binding protein SHBG. Interacts with angiotensin-2. Also interacts with angiotensin 1-7. Interacts with APOM. Interacts with selenoprotein SEPP1. Interacts with LEP. Interacts with ALB. Interacts with the antiapoptotic protein BIRC5/survivin. Interacts with matrix metalloproteinase MMP2 in complex with metalloproteinase inhibitor TIMP1. In neurons, forms a trimeric complex with APP and APPB1/FE65. Interacts with LDLRAP1/ARH; mediates trafficking of LRP2 to the endocytic recycling compartment. Does not interact with beta-amyloid protein 40 alone but interacts with the complex composed of beta-amyloid protein 40 and CLU/APOJ. Interacts with MDK. A fraction undergoes proteolytic cleavage of the extracellular domain at the cell membrane to generate a cytoplasmic tail fragment. This is internalized into the early endosome from where it trafficks in an LDLRAP1/ARH-dependent manner to the endocytic recycling compartment (ERC). In the ERC, it is further cleaved by gamma-secretase to release a fragment which translocates to the nucleus and mediates transcriptional repression. In terms of processing, N-glycosylation is required for ligand binding. In the inner ear, expressed in the lumen of the endolymphatic sac where it localizes to macrophage-like cells as well as to mitochondria-rich and ribosome-rich epithelial cells (at protein level). In the inner ear, expressed in marginal cells of the stria vascularis, epithelial cells at the spiral prominence, epithelial cells of Reissner's membrane facing the cochlear duct, and Kolliker's organ (at protein level). Expressed in the choroid plexus epithelium in the brain (at protein level). In the brain, also expressed in astrocytes (at protein level). Expression also detected in epithelial cells of the kidney glomerulus and proximal tubule, lung, epididymis and yolk sac.

Its subcellular location is the apical cell membrane. It localises to the endosome lumen. The protein localises to the membrane. It is found in the clathrin-coated pit. The protein resides in the cell projection. Its subcellular location is the dendrite. It localises to the axon. Its function is as follows. Multiligand endocytic receptor. Acts together with CUBN to mediate endocytosis of high-density lipoproteins. Mediates receptor-mediated uptake of polybasic drugs such as aprotinin, aminoglycosides and polymyxin B. In the kidney, mediates the tubular uptake and clearance of leptin. Also mediates transport of leptin across the blood-brain barrier through endocytosis at the choroid plexus epithelium. Endocytosis of leptin in neuronal cells is required for hypothalamic leptin signaling and leptin-mediated regulation of feeding and body weight. Mediates endocytosis and subsequent lysosomal degradation of CST3 in kidney proximal tubule cells. Mediates renal uptake of 25-hydroxyvitamin D3 in complex with the vitamin D3 transporter GC/DBP. Mediates renal uptake of metallothionein-bound heavy metals. Together with CUBN, mediates renal reabsorption of myoglobin. Mediates renal uptake and subsequent lysosomal degradation of APOM. Plays a role in kidney selenium homeostasis by mediating renal endocytosis of selenoprotein SEPP1. Mediates renal uptake of the antiapoptotic protein BIRC5/survivin which may be important for functional integrity of the kidney. Mediates renal uptake of matrix metalloproteinase MMP2 in complex with metalloproteinase inhibitor TIMP1. Mediates endocytosis of Sonic hedgehog protein N-product (ShhN), the active product of SHH. Also mediates ShhN transcytosis. In the embryonic neuroepithelium, mediates endocytic uptake and degradation of BMP4, is required for correct SHH localization in the ventral neural tube and plays a role in patterning of the ventral telencephalon. Required at the onset of neurulation to sequester SHH on the apical surface of neuroepithelial cells of the rostral diencephalon ventral midline and to control PTCH1-dependent uptake and intracellular trafficking of SHH. During neurulation, required in neuroepithelial cells for uptake of folate bound to the folate receptor FOLR1 which is necessary for neural tube closure. In the adult brain, negatively regulates BMP signaling in the subependymal zone which enables neurogenesis to proceed. In astrocytes, mediates endocytosis of ALB which is required for the synthesis of the neurotrophic factor oleic acid. Involved in neurite branching. During optic nerve development, required for SHH-mediated migration and proliferation of oligodendrocyte precursor cells. Mediates endocytic uptake and clearance of SHH in the retinal margin which protects retinal progenitor cells from mitogenic stimuli and keeps them quiescent. Plays a role in reproductive organ development by mediating uptake in reproductive tissues of androgen and estrogen bound to the sex hormone binding protein SHBG. Mediates endocytosis of angiotensin-2. Also mediates endocytosis of angiotensin 1-7. Binds to the complex composed of beta-amyloid protein 40 and CLU/APOJ and mediates its endocytosis and lysosomal degradation. Required for embryonic heart development. Required for normal hearing, possibly through interaction with estrogen in the inner ear. This chain is Low-density lipoprotein receptor-related protein 2 (Lrp2), found in Rattus norvegicus (Rat).